Here is a 243-residue protein sequence, read N- to C-terminus: Glycerophosphodiester phosphodiesterase (243 aa).

Residues 3-239 (TLVIAHRGDS…DDPETLINLV (237 aa)) enclose the GP-PDE domain. The active-site Proton acceptor is the H8. Ca(2+) is bound by residues E35 and D37. H50 (proton donor) is an active-site residue. A Ca(2+)-binding site is contributed by E110.

The protein belongs to the glycerophosphoryl diester phosphodiesterase family. In terms of assembly, homodimer. Mg(2+) is required as a cofactor. Ca(2+) serves as cofactor.

It carries out the reaction a sn-glycero-3-phosphodiester + H2O = an alcohol + sn-glycerol 3-phosphate + H(+). It catalyses the reaction sn-glycerol 3-phosphocholine + H2O = sn-glycerol 3-phosphate + choline + H(+). With respect to regulation, inhibited by EDTA. Functionally, glycerophosphodiester phosphodiesterase hydrolyzes glycerophosphodiesters into glycerol-3-phosphate (G3P) and the corresponding alcohol. Can use glycerophosphocholine. The polypeptide is Glycerophosphodiester phosphodiesterase (Caldanaerobacter subterraneus subsp. tengcongensis (strain DSM 15242 / JCM 11007 / NBRC 100824 / MB4) (Thermoanaerobacter tengcongensis)).